The chain runs to 500 residues: Histidinol dehydrogenase homolog 1 (500 aa).

The tract at residues 1–25 (MPPAGGIFHRPPTTRKSRRLTPRSA) is disordered. Basic residues predominate over residues 12 to 21 (PTTRKSRRLT). 2 residues coordinate Zn(2+): Gln313 and His316. Residues Glu381 and His382 each act as proton acceptor in the active site. Zn(2+) is bound by residues Asp415 and His475.

The protein belongs to the histidinol dehydrogenase family. Zn(2+) is required as a cofactor.

This is Histidinol dehydrogenase homolog 1 from Mesorhizobium japonicum (strain LMG 29417 / CECT 9101 / MAFF 303099) (Mesorhizobium loti (strain MAFF 303099)).